The sequence spans 218 residues: Carboxylesterase 2 (218 aa).

Active-site charge relay system residues include S114, D168, and H199.

Belongs to the AB hydrolase superfamily. AB hydrolase 2 family. Homodimer.

It carries out the reaction a carboxylic ester + H2O = an alcohol + a carboxylate + H(+). Functionally, hydrolyzes carboxylic ester bonds with relatively broad substrate specificity. The chain is Carboxylesterase 2 (estB) from Pseudomonas fluorescens.